We begin with the raw amino-acid sequence, 111 residues long: Cytochrome bo(3) ubiquinol oxidase subunit 4 (111 aa).

Residues Met-1–Gly-17 are Cytoplasmic-facing. Residues Ser-18 to Met-38 traverse the membrane as a helical segment. Over Asp-39–Ala-46 the chain is Periplasmic. A helical membrane pass occupies residues Thr-47–Leu-67. Over His-68 to Met-80 the chain is Cytoplasmic. A helical transmembrane segment spans residues Ala-81–Phe-101. Over Ser-102 to Pro-111 the chain is Periplasmic.

The protein belongs to the cytochrome c oxidase bacterial subunit 4 family. In terms of assembly, heterooctamer of two A chains, two B chains, two C chains and two D chains.

It is found in the cell inner membrane. Functionally, cytochrome bo(3) ubiquinol terminal oxidase is the component of the aerobic respiratory chain of E.coli that predominates when cells are grown at high aeration. Has proton pump activity across the membrane in addition to electron transfer, pumping 2 protons/electron. In Pseudomonas aeruginosa (strain ATCC 15692 / DSM 22644 / CIP 104116 / JCM 14847 / LMG 12228 / 1C / PRS 101 / PAO1), this protein is Cytochrome bo(3) ubiquinol oxidase subunit 4 (cyoD).